A 1088-amino-acid chain; its full sequence is RNA-directed RNA polymerase (1088 aa).

A RdRp catalytic domain is found at 501–687 (LSYGDVTRFL…AKRYIAGGKI (187 aa)).

This sequence belongs to the reoviridae RNA-directed RNA polymerase family. In terms of assembly, interacts with VP3 (Potential). Interacts with VP2; this interaction activates VP1. Interacts with NSP5; this interaction is probably necessary for the formation of functional virus factories. Interacts with NSP2; this interaction is weak. Mg(2+) is required as a cofactor.

It localises to the virion. It catalyses the reaction RNA(n) + a ribonucleoside 5'-triphosphate = RNA(n+1) + diphosphate. Functionally, RNA-directed RNA polymerase that is involved in both transcription and genome replication. Together with VP3 capping enzyme, forms an enzyme complex positioned near the channels situated at each of the five-fold vertices of the core. Following infection, the outermost layer of the virus is lost, leaving a double-layered particle (DLP) made up of the core and VP6 shell. VP1 then catalyzes the transcription of fully conservative plus-strand genomic RNAs that are extruded through the DLP's channels into the cytoplasm where they function as mRNAs for translation of viral proteins. One copy of each of the viral (+)RNAs is also recruited during core assembly, together with newly synthesized polymerase complexes and VP2. The polymerase of these novo-formed particles catalyzes the synthesis of complementary minus-strands leading to dsRNA formation. To do so, the polymerase specifically recognizes and binds 4 bases 5'-UGUG-3' in the conserved 3'-sequence of plus-strand RNA templates. VP2 presumably activates the autoinhibited VP1-RNA complex to coordinate packaging and genome replication. Once dsRNA synthesis is complete, the polymerase switches to the transcriptional mode, thus providing secondary transcription. The chain is RNA-directed RNA polymerase from Sus scrofa (Pig).